A 609-amino-acid polypeptide reads, in one-letter code: Wee1-like protein kinase (609 aa).

The span at Met1–Met10 shows a compositional bias: basic and acidic residues. 2 disordered regions span residues Met1–Pro88 and Pro147–Pro166. Residues Ser23, Ser25, and Ser27 each carry the phosphoserine modification. Basic and acidic residues predominate over residues Arg37–Pro48. Thr47 bears the Phosphothreonine mark. Ser52 is subject to Phosphoserine. The span at Leu153–Thr165 shows a compositional bias: polar residues. Residue Thr165 is modified to Phosphothreonine. Phosphoserine is present on Ser168. The Protein kinase domain maps to Phe239 to Leu517. ATP contacts are provided by residues Ile245 to Val253 and Lys268. Asp361 acts as the Proton acceptor in catalysis. Mg(2+) is bound by residues Asn366 and Asp412.

This sequence belongs to the protein kinase superfamily. Ser/Thr protein kinase family. WEE1 subfamily. Mg(2+) is required as a cofactor. Phosphorylated during M and G1 phases. As to expression, expressed in embryos; expression remains high in the proliferating cells of the central nervous system well after cells in the rest of the embryo have ceased dividing.

Its subcellular location is the nucleus. The enzyme catalyses L-tyrosyl-[protein] + ATP = O-phospho-L-tyrosyl-[protein] + ADP + H(+). Its activity is regulated as follows. Negatively regulated by phosphorylation in the M-phase. Its function is as follows. Acts as a negative regulator of entry into mitosis (G2 to M transition). This kinase specifically phosphorylates and inactivates cyclin B1-complexed CDC2. The chain is Wee1-like protein kinase from Drosophila melanogaster (Fruit fly).